Consider the following 85-residue polypeptide: Kunitz-type serine protease inhibitor homolog beta-bungarotoxin B1 chain, major component (85 aa).

The signal sequence occupies residues 1–24; it reads MSSGGLLLLLGLLTLCAELIPVSS. The 51-residue stretch at 31–81 folds into the BPTI/Kunitz inhibitor domain; it reads CDKPPDKGNCGPVRRAFYYDTRLKTCKAFQYRGCNGNGNHFKTETLCRCEC. Cystine bridges form between C31-C81, C40-C64, and C56-C77.

Belongs to the venom Kunitz-type family. In terms of assembly, heterodimer; disulfide-linked. The A chains have phospholipase A2 activity and the B chains show homology with the basic protease inhibitors. In terms of tissue distribution, expressed by the venom gland.

It localises to the secreted. In terms of biological role, beta-1-bungarotoxin is a presynaptic neurotoxin of the venom. The B chain is homologous to venom basic protease inhibitors but has no protease inhibitor activity and blocks voltage-gated potassium channels (Kv). The chain is Kunitz-type serine protease inhibitor homolog beta-bungarotoxin B1 chain, major component from Bungarus multicinctus (Many-banded krait).